The sequence spans 155 residues: Deoxyuridine 5'-triphosphate nucleotidohydrolase (155 aa).

Substrate-binding positions include 74–76 (RSG), Asn-87, and 91–93 (TID).

Belongs to the dUTPase family. It depends on Mg(2+) as a cofactor.

It catalyses the reaction dUTP + H2O = dUMP + diphosphate + H(+). It functions in the pathway pyrimidine metabolism; dUMP biosynthesis; dUMP from dCTP (dUTP route): step 2/2. Functionally, this enzyme is involved in nucleotide metabolism: it produces dUMP, the immediate precursor of thymidine nucleotides and it decreases the intracellular concentration of dUTP so that uracil cannot be incorporated into DNA. The protein is Deoxyuridine 5'-triphosphate nucleotidohydrolase of Cereibacter sphaeroides (strain ATCC 17023 / DSM 158 / JCM 6121 / CCUG 31486 / LMG 2827 / NBRC 12203 / NCIMB 8253 / ATH 2.4.1.) (Rhodobacter sphaeroides).